The sequence spans 241 residues: Histidine utilization repressor (241 aa).

Residues 11–79 form the HTH gntR-type domain; it reads APFYEKVKQA…QGVGTFVAEP (69 aa). The segment at residues 39–58 is a DNA-binding region (H-T-H motif); it reads EAELVAQFGFSRMTINRALR.

The protein operates within amino-acid degradation; L-histidine degradation into L-glutamate [regulation]. Its function is as follows. Repressor which binds to the hutP region in the histidine utilization (hut) operon. It blocks the expression of all the hut genes in the absence of inducer. The chain is Histidine utilization repressor (hutC) from Klebsiella aerogenes (Enterobacter aerogenes).